The chain runs to 66 residues: Cold shock-like protein (66 aa).

A CSD domain is found at 3–62 (GKVKWFDSKKGYGFITKDEGGDVFVHWSAIEMEGFKTLKEGQVVEFEIQEGKKGPQAAHV).

Monomer.

It localises to the cytoplasm. The polypeptide is Cold shock-like protein (csp) (Thermotoga maritima (strain ATCC 43589 / DSM 3109 / JCM 10099 / NBRC 100826 / MSB8)).